A 75-amino-acid chain; its full sequence is Small ribosomal subunit protein bS18 (75 aa).

This sequence belongs to the bacterial ribosomal protein bS18 family. As to quaternary structure, part of the 30S ribosomal subunit. Forms a tight heterodimer with protein bS6.

Functionally, binds as a heterodimer with protein bS6 to the central domain of the 16S rRNA, where it helps stabilize the platform of the 30S subunit. This Sodalis glossinidius (strain morsitans) protein is Small ribosomal subunit protein bS18.